A 320-amino-acid polypeptide reads, in one-letter code: Malate dehydrogenase (320 aa).

NAD(+)-binding positions include 10–15 (GAGQIG) and Asp34. Residues Arg83 and Arg89 each contribute to the substrate site. Residues Asn96 and 119 to 121 (ITN) contribute to the NAD(+) site. Positions 121 and 152 each coordinate substrate. His176 acts as the Proton acceptor in catalysis.

It belongs to the LDH/MDH superfamily. MDH type 3 family.

The catalysed reaction is (S)-malate + NAD(+) = oxaloacetate + NADH + H(+). In terms of biological role, catalyzes the reversible oxidation of malate to oxaloacetate. In Methylobacterium sp. (strain 4-46), this protein is Malate dehydrogenase.